Here is a 206-residue protein sequence, read N- to C-terminus: Macrophage immunometabolism regulator (206 aa).

Met1 is modified (N-acetylmethionine). A disordered region spans residues 1–41 (MEVDINGESRSTLTTLPFPGAEANSPGKAEAEKPRCSSTPC). Ser25, Ser140, and Ser167 each carry phosphoserine.

It belongs to the UNC119-binding protein family. As to quaternary structure, interacts with UNC119 and UNC119B; interaction preferentially takes place when UNC119 and UNC119B are unliganded with myristoylated proteins. Post-translationally, phosphorylated. As to expression, high expression in normal macrophages, monocytes, and cultured rheumatoid arthritis synovial fibroblasts (RASFs), with lower expression in B- and T-cells, and little to no expression in other tissues and cell lines.

It is found in the cytoplasm. It localises to the cell projection. The protein resides in the cilium. Regulates the macrophage function, by enhancing the resolution of inflammation and wound repair functions mediated by M2 macrophages. The regulation of macrophage function is, due at least in part, to its ability to inhibit glycolysis. May also play a role in trafficking of proteins via its interaction with UNC119 and UNC119B cargo adapters: may help the release of UNC119 and UNC119B cargo or the recycling of UNC119 and UNC119B. May play a role in ciliary membrane localization via its interaction with UNC119B and protein transport into photoreceptor cells. In Homo sapiens (Human), this protein is Macrophage immunometabolism regulator.